The sequence spans 528 residues: Peptide chain release factor 3 (528 aa).

The 269-residue stretch at 10-278 folds into the tr-type G domain; it reads DRRRTFGIIS…AFVEQAPVPR (269 aa). Residues 19–26, 87–91, and 141–144 contribute to the GTP site; these read SHPDAGKT, DTPGH, and NKLD.

Belongs to the TRAFAC class translation factor GTPase superfamily. Classic translation factor GTPase family. PrfC subfamily.

The protein resides in the cytoplasm. Its function is as follows. Increases the formation of ribosomal termination complexes and stimulates activities of RF-1 and RF-2. It binds guanine nucleotides and has strong preference for UGA stop codons. It may interact directly with the ribosome. The stimulation of RF-1 and RF-2 is significantly reduced by GTP and GDP, but not by GMP. This is Peptide chain release factor 3 from Syntrophotalea carbinolica (strain DSM 2380 / NBRC 103641 / GraBd1) (Pelobacter carbinolicus).